Reading from the N-terminus, the 415-residue chain is Putative transcription factor BOFH (415 aa).

Residues 159-221 are disordered; it reads SQEPVQHQDQ…NEGEDDDGMD (63 aa). A compositionally biased stretch (gly residues) spans 174-183; it reads INGGGRGGYW. Residues 193–202 are compositionally biased toward basic residues; it reads QQQRRRKKRL. Residues 206-220 show a composition bias toward acidic residues; sequence ETDDDGNEGEDDDGM. 3 DNA-binding regions span residues 234-238, 303-310, and 374-377; these read REHPF, NKPKMRHY, and YVPT.

Belongs to the FLO/LFY family. Acts in the floral primordia.

Its subcellular location is the nucleus. Functionally, controls floral meristem identity. Is required very early in flower development and may act here as a transcription factor. In Brassica oleracea var. botrytis (Cauliflower), this protein is Putative transcription factor BOFH.